The chain runs to 235 residues: MPPRKRRRQCQKAQLLFHQQPLEGPKPHYESHQQPITHTVQVPSKPIDQSTITSWVLPQFDTAAESRFPTHRKHHRDQARHPTRRSTCKFPRLTFESPESSSSETLLLSNREQLQNSEKDAPRRPLVPLFSPQSCGELSVHVPQSLPHVFMPPDIQTPGSSVREDPISPDQKENSLPSCILGPRTPRTPEPGPVLVKDTPEEKYGIKVTWRRRRHLFAYLKERGKLDKSQFLVKT.

A Phosphoserine modification is found at S50. The RAD1-binding motif motif lies at 54–60 (SWVLPQF). Residues 66–106 (SRFPTHRKHHRDQARHPTRRSTCKFPRLTFESPESSSSETL) form a disordered region. The span at 69–87 (PTHRKHHRDQARHPTRRST) shows a compositional bias: basic residues. A compositionally biased stretch (low complexity) spans 96 to 106 (ESPESSSSETL). Positions 123–130 (RRPLVPLF) match the D-box motif. The interval 156-198 (QTPGSSVREDPISPDQKENSLPSCILGPRTPRTPEPGPVLVKD) is disordered. Basic and acidic residues predominate over residues 162–173 (VREDPISPDQKE). Positions 171-175 (QKENS) match the KEN box motif.

Interacts (when phosphorylated by PLK1) with POLQ; promoting POLQ recruitment to DNA damage sites. Interacts with RAD1; interaction is direct and promotes association with the 9-1-1 (RAD9-RAD1-HUS1) complex. Interacts with RAD18. Interacts with TOPBP1. Interacts with UBE2N. Phosphorylated at Ser-50 by PLK1, promoting interaction with polymerase theta (POLQ). Post-translationally, ubiquitinated and degraded by the APC/C complex upon mitotic exit.

It localises to the nucleus. The protein resides in the chromosome. Involved in microhomology-mediated end-joining (MMEJ) DNA repair by promoting recruitment of polymerase theta (POLQ) to DNA damage sites during mitosis. MMEJ is an alternative non-homologous end-joining (NHEJ) machinery that takes place during mitosis to repair double-strand breaks in DNA that originate in S-phase. Accumulates in M-phase; following phosphorylation by PLK1, interacts with POLQ, enabling its recruitment to double-strand breaks for subsequent repair. Also involved in the DNA damage response (DDR) signaling in response to genotoxic stresses such as ionizing radiation (IR) during the S phase. Recruited to sites of DNA damage through interaction with the 9-1-1 cell-cycle checkpoint response complex and TOPBP1 in a ATR-dependent manner. Required for the progression of the G1 to S phase transition. Plays a role in the stimulation of CHEK1 phosphorylation. The polypeptide is RAD9, HUS1, RAD1-interacting nuclear orphan protein 1 (Rhno1) (Rattus norvegicus (Rat)).